Reading from the N-terminus, the 687-residue chain is Pre-mRNA-splicing factor CLF1 (687 aa).

13 HAT repeats span residues 45–77 (EYQR…FEIE), 79–111 (HDMR…AELK), 113–145 (KCIN…VEES), 147–178 (NNVE…FEIR), 180–211 (KNWN…FENR), 213–247 (GNTE…AKLV), 251–283 (AHWE…LKAG), 300–332 (TISY…LISE), 337–369 (QIMQ…LWMR), 383–416 (LEEE…FLIR), 451–483 (KEFD…LEEN), 525–557 (QEFE…YQTS), and 629–661 (LDQE…YIFP).

It belongs to the crooked-neck family. In terms of assembly, belongs to the NTC complex (or PRP19-associated complex), composed of at least CEF1, CLF1, ISY1, NTC20, SNT309, SYF1, SYF2, and PRP19. The NTC complex associates with the spliceosome after the release of the U1 and U4 snRNAs and forms the CWC spliceosome subcomplex (or CEF1-associated complex) reminiscent of a late-stage spliceosome composed also of the U2, U5 and U6 snRNAs and at least BUD13, BUD31, BRR2, CDC40, CUS1, CWC2, CWC15, CWC21, CWC22, CWC23, CWC24, CWC25, CWC27, ECM2, HSH155, IST3, LEA1, MSL1, PRP8, PRP9, PRP11, PRP21, PRP22, PRP45, PRP46, SLU7, SMB1, SMD1, SMD2, SMD3, SMX2, SMX3, SNU114, SPP2, RSE1 and YJU2. Interacts with CEF1, ISY1, MUD2, NTC20, PRP22, PRP40, PRP46, SYF1, SYF2, and the ORC2 subunit of the origin recognition complex.

The protein localises to the nucleus. Functionally, involved in pre-mRNA splicing and cell cycle progression. Required for the spliceosome assembly by promoting the functional integration of the U4/U6.U5 tri-snRNP particle into the U1-, U2-dependent pre-spliceosome. Also recruits PRP19 to the spliceosome, as a component of the NTC complex (or PRP19-associated complex). The association of the NTC complex to the spliceosome mediates conformational rearrangement or stabilizes the structure of the spliceosome after U4 snRNA dissociation, which leads to spliceosome maturation. Required for initiation of the DNA replication by binding the RNA replication origins, probably through its interaction with the origin recognition complex (ORC). This Saccharomyces cerevisiae (strain ATCC 204508 / S288c) (Baker's yeast) protein is Pre-mRNA-splicing factor CLF1 (CLF1).